A 932-amino-acid chain; its full sequence is Isoleucine--tRNA ligase (932 aa).

Residues 57–67 carry the 'HIGH' region motif; it reads PYANGDIHIGT. Glutamate 559 serves as a coordination point for L-isoleucyl-5'-AMP. Residues 600-604 carry the 'KMSKS' region motif; the sequence is KMSKS. Lysine 603 is an ATP binding site. Positions 899, 902, 919, and 922 each coordinate Zn(2+).

It belongs to the class-I aminoacyl-tRNA synthetase family. IleS type 1 subfamily. Monomer. It depends on Zn(2+) as a cofactor.

It is found in the cytoplasm. It catalyses the reaction tRNA(Ile) + L-isoleucine + ATP = L-isoleucyl-tRNA(Ile) + AMP + diphosphate. In terms of biological role, catalyzes the attachment of isoleucine to tRNA(Ile). As IleRS can inadvertently accommodate and process structurally similar amino acids such as valine, to avoid such errors it has two additional distinct tRNA(Ile)-dependent editing activities. One activity is designated as 'pretransfer' editing and involves the hydrolysis of activated Val-AMP. The other activity is designated 'posttransfer' editing and involves deacylation of mischarged Val-tRNA(Ile). This is Isoleucine--tRNA ligase from Thermoanaerobacter pseudethanolicus (strain ATCC 33223 / 39E) (Clostridium thermohydrosulfuricum).